Here is a 119-residue protein sequence, read N- to C-terminus: Putative nitrilase-like protein YIL165C (119 aa).

The 82-residue stretch at 1 to 82 (MKNIAYEGRL…EGLLTAEINT (82 aa)) folds into the CN hydrolase domain. D21 (proton acceptor) is an active-site residue.

Belongs to the carbon-nitrogen hydrolase superfamily. Nitrilase family.

The polypeptide is Putative nitrilase-like protein YIL165C (Saccharomyces cerevisiae (strain ATCC 204508 / S288c) (Baker's yeast)).